The primary structure comprises 211 residues: Thymidylate kinase (211 aa).

11–18 (GPDGAGKT) is a binding site for ATP.

The protein belongs to the thymidylate kinase family.

It carries out the reaction dTMP + ATP = dTDP + ADP. In terms of biological role, phosphorylation of dTMP to form dTDP in both de novo and salvage pathways of dTTP synthesis. The protein is Thymidylate kinase of Streptococcus equi subsp. equi (strain 4047).